We begin with the raw amino-acid sequence, 235 residues long: Attacin-E (235 aa).

An N-terminal signal peptide occupies residues 1 to 19; it reads MFGKIVFLLLVALCAGVQS. A propeptide spanning residues 20–47 is cleaved from the precursor; it reads RYLIVSEPVYYIEHYEEPELLASSRVRR.

The protein belongs to the attacin/sarcotoxin-2 family. Post-translationally, attacin F appears to be derived by proteolytic digestion of attacin E.

It is found in the secreted. In terms of biological role, hemolymph antibacterial protein. This is Attacin-E from Hyalophora cecropia (Cecropia moth).